A 135-amino-acid polypeptide reads, in one-letter code: UPF0355 protein SAV0387 (135 aa).

Belongs to the UPF0355 family.

The polypeptide is UPF0355 protein SAV0387 (Staphylococcus aureus (strain Mu50 / ATCC 700699)).